The sequence spans 324 residues: Putative HTH-type transcriptional regulatory protein UNCMA_15260 (324 aa).

In terms of domain architecture, HTH cro/C1-type spans L132 to I189. Positions L143–S162 form a DNA-binding region, H-T-H motif.

The polypeptide is Putative HTH-type transcriptional regulatory protein UNCMA_15260 (Methanocella arvoryzae (strain DSM 22066 / NBRC 105507 / MRE50)).